We begin with the raw amino-acid sequence, 938 residues long: Translation initiation factor IF-2 (938 aa).

The disordered stretch occupies residues 55–322 (KAEASAAPAA…RKSKRARRQE (268 aa)). Composition is skewed to low complexity over residues 57–68 (EASAAPAAPAEK) and 77–117 (KKAA…AAAP). Over residues 118–136 (KPGPKPAPVAEQPAPPAEP) the composition is skewed to pro residues. Low complexity-rich tracts occupy residues 141–153 (APEAPAASAAPAA), 180–198 (GMGRRPAPGAPAAPGAGDN), and 224–233 (MMPKSPSAFG). Residues 247–293 (PGRGGAPGRGGAPGRGGVGTGAPGRGGAPGGGFGPSGGGRPGGGRPG) show a composition bias toward gly residues. Over residues 310 to 319 (RRGRKSKRAR) the composition is skewed to basic residues. The tr-type G domain occupies 431 to 603 (ARPPVVTVMG…VVLTADASLD (173 aa)). Positions 440–447 (GHVDHGKT) are G1. Residue 440-447 (GHVDHGKT) coordinates GTP. Residues 465–469 (GITQH) are G2. Residues 490 to 493 (DTPG) are G3. GTP-binding positions include 490-494 (DTPGH) and 544-547 (NKID). A G4 region spans residues 544 to 547 (NKID). Residues 580–582 (SAK) are G5.

The protein belongs to the TRAFAC class translation factor GTPase superfamily. Classic translation factor GTPase family. IF-2 subfamily.

The protein localises to the cytoplasm. Its function is as follows. One of the essential components for the initiation of protein synthesis. Protects formylmethionyl-tRNA from spontaneous hydrolysis and promotes its binding to the 30S ribosomal subunits. Also involved in the hydrolysis of GTP during the formation of the 70S ribosomal complex. The chain is Translation initiation factor IF-2 from Nocardioides sp. (strain ATCC BAA-499 / JS614).